A 306-amino-acid polypeptide reads, in one-letter code: Pantothenate kinase (306 aa).

ATP is bound at residue 90–97 (GSVAVGKS).

The protein belongs to the prokaryotic pantothenate kinase family.

The protein localises to the cytoplasm. The enzyme catalyses (R)-pantothenate + ATP = (R)-4'-phosphopantothenate + ADP + H(+). The protein operates within cofactor biosynthesis; coenzyme A biosynthesis; CoA from (R)-pantothenate: step 1/5. The protein is Pantothenate kinase of Lactococcus lactis subsp. cremoris (strain SK11).